Reading from the N-terminus, the 351-residue chain is Peptidyl-Lys metalloendopeptidase (351 aa).

The signal sequence occupies residues Met1–Ala22. A propeptide spanning residues Ala23 to Arg183 is cleaved from the precursor. 2 disulfide bridges follow: Cys189–Cys259 and Cys261–Cys281. His301 serves as a coordination point for Zn(2+). Glu302 is an active-site residue. Residues His305 and Asp314 each contribute to the Zn(2+) site.

The protein belongs to the peptidase M35 family. Zn(2+) serves as cofactor.

It localises to the secreted. It catalyses the reaction Preferential cleavage in proteins: -Xaa-|-Lys- (in which Xaa may be Pro).. Its activity is regulated as follows. Inhibited by chelating agents such as imidazole, alpha,alpha'-bipyridine, and 1,10-phenanthroline. In Armillaria mellea (Honey mushroom), this protein is Peptidyl-Lys metalloendopeptidase (MEP).